Consider the following 689-residue polypeptide: Elongation factor G (689 aa).

The region spanning 8–282 (ERTRNIGIMA…AVVDYLPAPT (275 aa)) is the tr-type G domain. GTP contacts are provided by residues 17 to 24 (AHIDAGKT), 81 to 85 (DTPGH), and 135 to 138 (NKMD).

This sequence belongs to the TRAFAC class translation factor GTPase superfamily. Classic translation factor GTPase family. EF-G/EF-2 subfamily.

It is found in the cytoplasm. In terms of biological role, catalyzes the GTP-dependent ribosomal translocation step during translation elongation. During this step, the ribosome changes from the pre-translocational (PRE) to the post-translocational (POST) state as the newly formed A-site-bound peptidyl-tRNA and P-site-bound deacylated tRNA move to the P and E sites, respectively. Catalyzes the coordinated movement of the two tRNA molecules, the mRNA and conformational changes in the ribosome. The protein is Elongation factor G of Desulforudis audaxviator (strain MP104C).